The following is a 240-amino-acid chain: Hairy and enhancer of split-related protein HELT (240 aa).

In terms of domain architecture, bHLH spans arginine 10 to leucine 65. N6-acetyllysine is present on lysine 48. In terms of domain architecture, Orange spans phenylalanine 86–leucine 121.

It belongs to the HEY family. In terms of assembly, self-associates. Interacts with HES5 and HEY2. As to expression, expressed in heart and testis.

It is found in the nucleus. Functionally, transcriptional repressor which binds preferentially to the canonical E box sequence 5'-CACGCG-3'. Required for the development of GABAergic neurons. This chain is Hairy and enhancer of split-related protein HELT (Helt), found in Mus musculus (Mouse).